The chain runs to 660 residues: DNA mismatch repair protein MutL (660 aa).

The segment at Asp-408–Phe-436 is disordered. A compositionally biased stretch (polar residues) spans Glu-425 to Phe-436.

This sequence belongs to the DNA mismatch repair MutL/HexB family.

In terms of biological role, this protein is involved in the repair of mismatches in DNA. It is required for dam-dependent methyl-directed DNA mismatch repair. May act as a 'molecular matchmaker', a protein that promotes the formation of a stable complex between two or more DNA-binding proteins in an ATP-dependent manner without itself being part of a final effector complex. The polypeptide is DNA mismatch repair protein MutL (Streptococcus uberis (strain ATCC BAA-854 / 0140J)).